The primary structure comprises 115 residues: Large ribosomal subunit protein bL19 (115 aa).

This sequence belongs to the bacterial ribosomal protein bL19 family.

Its function is as follows. This protein is located at the 30S-50S ribosomal subunit interface and may play a role in the structure and function of the aminoacyl-tRNA binding site. This chain is Large ribosomal subunit protein bL19, found in Lactobacillus acidophilus (strain ATCC 700396 / NCK56 / N2 / NCFM).